The primary structure comprises 462 residues: tRNA modification GTPase MnmE (462 aa).

(6S)-5-formyl-5,6,7,8-tetrahydrofolate is bound by residues arginine 23, glutamate 88, and arginine 127. In terms of domain architecture, TrmE-type G spans 224-383 (GLATVIIGRP…LEKAIADLFF (160 aa)). Asparagine 234 contributes to the K(+) binding site. GTP contacts are provided by residues 234 to 239 (NVGKSS), 253 to 259 (TDIPGTT), and 278 to 281 (DTAG). Serine 238 is a Mg(2+) binding site. Positions 253, 255, and 258 each coordinate K(+). Mg(2+) is bound at residue threonine 259. Lysine 462 serves as a coordination point for (6S)-5-formyl-5,6,7,8-tetrahydrofolate.

This sequence belongs to the TRAFAC class TrmE-Era-EngA-EngB-Septin-like GTPase superfamily. TrmE GTPase family. As to quaternary structure, homodimer. Heterotetramer of two MnmE and two MnmG subunits. K(+) serves as cofactor.

The protein resides in the cytoplasm. Its function is as follows. Exhibits a very high intrinsic GTPase hydrolysis rate. Involved in the addition of a carboxymethylaminomethyl (cmnm) group at the wobble position (U34) of certain tRNAs, forming tRNA-cmnm(5)s(2)U34. The protein is tRNA modification GTPase MnmE of Geobacillus thermodenitrificans (strain NG80-2).